The chain runs to 120 residues: Immunoglobulin kappa variable 2-30 (120 aa).

Residues 1–20 form the signal peptide; it reads MRLPAQLLGLLMLWVPGSSG. Residues 21–43 form a framework-1 region; sequence DVVMTQSPLSLPVTLGQPASISC. The Ig-like domain maps to 21-120; it reads DVVMTQSPLS…YYCMQGTHWP (100 aa). Cys43 and Cys113 are oxidised to a cystine. Residues 44–59 form a complementarity-determining-1 region; that stretch reads RSSQSLVYSDGNTYLN. The framework-2 stretch occupies residues 60–74; it reads WFQQRPGQSPRRLIY. Positions 75–81 are complementarity-determining-2; it reads KVSNRDS. Positions 82–113 are framework-3; sequence GVPDRFSGSGSGTDFTLKISRVEAEDVGVYYC. A complementarity-determining-3 region spans residues 114-120; it reads MQGTHWP.

In terms of assembly, immunoglobulins are composed of two identical heavy chains and two identical light chains; disulfide-linked.

The protein resides in the secreted. Its subcellular location is the cell membrane. V region of the variable domain of immunoglobulin light chains that participates in the antigen recognition. Immunoglobulins, also known as antibodies, are membrane-bound or secreted glycoproteins produced by B lymphocytes. In the recognition phase of humoral immunity, the membrane-bound immunoglobulins serve as receptors which, upon binding of a specific antigen, trigger the clonal expansion and differentiation of B lymphocytes into immunoglobulins-secreting plasma cells. Secreted immunoglobulins mediate the effector phase of humoral immunity, which results in the elimination of bound antigens. The antigen binding site is formed by the variable domain of one heavy chain, together with that of its associated light chain. Thus, each immunoglobulin has two antigen binding sites with remarkable affinity for a particular antigen. The variable domains are assembled by a process called V-(D)-J rearrangement and can then be subjected to somatic hypermutations which, after exposure to antigen and selection, allow affinity maturation for a particular antigen. The polypeptide is Immunoglobulin kappa variable 2-30 (Homo sapiens (Human)).